Reading from the N-terminus, the 72-residue chain is ATP synthase subunit c (72 aa).

A run of 2 helical transmembrane segments spans residues 5–25 and 52–72; these read LLAA…IGIA and GLSE…LFVV.

The protein belongs to the ATPase C chain family. As to quaternary structure, F-type ATPases have 2 components, F(1) - the catalytic core - and F(0) - the membrane proton channel. F(1) has five subunits: alpha(3), beta(3), gamma(1), delta(1), epsilon(1). F(0) has three main subunits: a(1), b(2) and c(10-14). The alpha and beta chains form an alternating ring which encloses part of the gamma chain. F(1) is attached to F(0) by a central stalk formed by the gamma and epsilon chains, while a peripheral stalk is formed by the delta and b chains.

Its subcellular location is the cell membrane. In terms of biological role, f(1)F(0) ATP synthase produces ATP from ADP in the presence of a proton or sodium gradient. F-type ATPases consist of two structural domains, F(1) containing the extramembraneous catalytic core and F(0) containing the membrane proton channel, linked together by a central stalk and a peripheral stalk. During catalysis, ATP synthesis in the catalytic domain of F(1) is coupled via a rotary mechanism of the central stalk subunits to proton translocation. Key component of the F(0) channel; it plays a direct role in translocation across the membrane. A homomeric c-ring of between 10-14 subunits forms the central stalk rotor element with the F(1) delta and epsilon subunits. In Clostridium perfringens (strain SM101 / Type A), this protein is ATP synthase subunit c.